We begin with the raw amino-acid sequence, 73 residues long: Mu-sparatoxin-Hv2 (73 aa).

The first 20 residues, 1–20, serve as a signal peptide directing secretion; that stretch reads MKFAIVITLLLVAFSAVALA. The propeptide occupies 21-35; the sequence is DKSIERAVMDLITAR. 3 disulfide bridges follow: C39–C53, C46–C58, and C52–C68. F72 bears the Phenylalanine amide mark.

Belongs to the neurotoxin 10 (Hwtx-1) family. As to expression, expressed by the venom gland.

The protein localises to the secreted. In terms of biological role, insecticidal toxin that potently and irreversibly blocks voltage-gated sodium channels (Nav) in cockroach dorsal unpaired median (DUM) neurons (IC(50)=833.7 nM). It does not change both the steady-state activation and inactivation curves, suggesting it acts as a pore blocker (possibly at Nav site 1). Does not show toxicity when intraperitoneally injected into mouse. This Heteropoda venatoria (Brown huntsman spider) protein is Mu-sparatoxin-Hv2.